The sequence spans 428 residues: GTPase Obg (428 aa).

The 158-residue stretch at 1–158 folds into the Obg domain; sequence MFVDQVQVEV…RFIKLELKVL (158 aa). One can recognise an OBG-type G domain in the interval 159–333; it reads ADVGLVGFPS…LMHKTAEVLK (175 aa). Residues 165 to 172, 190 to 194, 212 to 215, 282 to 285, and 314 to 316 contribute to the GTP site; these read GFPSVGKS, FTTLV, DLPG, TKMD, and SSL. Mg(2+) contacts are provided by serine 172 and threonine 192. Positions 350-428 constitute an OCT domain; that stretch reads YKYQPEPALK…IDDFTFEFVE (79 aa).

This sequence belongs to the TRAFAC class OBG-HflX-like GTPase superfamily. OBG GTPase family. Monomer. Mg(2+) serves as cofactor.

It is found in the cytoplasm. Its function is as follows. An essential GTPase which binds GTP, GDP and possibly (p)ppGpp with moderate affinity, with high nucleotide exchange rates and a fairly low GTP hydrolysis rate. Plays a role in control of the cell cycle, stress response, ribosome biogenesis and in those bacteria that undergo differentiation, in morphogenesis control. The chain is GTPase Obg from Lacticaseibacillus casei (strain BL23) (Lactobacillus casei).